Reading from the N-terminus, the 122-residue chain is Alpha-amylase/trypsin inhibitor (122 aa).

5 cysteine pairs are disulfide-bonded: cysteine 6/cysteine 55, cysteine 20/cysteine 44, cysteine 29/cysteine 85, cysteine 45/cysteine 103, and cysteine 57/cysteine 114.

It belongs to the protease inhibitor I6 (cereal trypsin/alpha-amylase inhibitor) family. Seeds.

The protein localises to the secreted. May play a protective role against endo- and exogenous hydrolytic activities in the Ragi seeds. The chain is Alpha-amylase/trypsin inhibitor from Eleusine coracana (Indian finger millet).